The following is a 303-amino-acid chain: Inosose dehydratase (303 aa).

The protein belongs to the IolE/MocC family. The cofactor is glutathione. Requires Co(2+) as cofactor. Mn(2+) is required as a cofactor.

The enzyme catalyses scyllo-inosose = 3D-3,5/4-trihydroxycyclohexane-1,2-dione + H2O. It participates in polyol metabolism; myo-inositol degradation into acetyl-CoA; acetyl-CoA from myo-inositol: step 2/7. Catalyzes the dehydration of inosose (2-keto-myo-inositol, 2KMI or 2,4,6/3,5-pentahydroxycyclohexanone) to 3D-(3,5/4)-trihydroxycyclohexane-1,2-dione (D-2,3-diketo-4-deoxy-epi-inositol). The polypeptide is Inosose dehydratase (Halalkalibacterium halodurans (strain ATCC BAA-125 / DSM 18197 / FERM 7344 / JCM 9153 / C-125) (Bacillus halodurans)).